We begin with the raw amino-acid sequence, 490 residues long: GTPase Der (490 aa).

EngA-type G domains are found at residues 3–166 and 203–376; these read PVVA…MDDV and IKLA…DSST. GTP-binding positions include 9 to 16, 56 to 60, 118 to 121, 209 to 216, 256 to 260, and 321 to 324; these read GRPNVGKS, DTGGI, NKTD, DTAGV, and NKWD. Positions 377 to 461 constitute a KH-like domain; the sequence is RRVSTAMLTR…PIRIQFKEGE (85 aa).

It belongs to the TRAFAC class TrmE-Era-EngA-EngB-Septin-like GTPase superfamily. EngA (Der) GTPase family. In terms of assembly, associates with the 50S ribosomal subunit.

GTPase that plays an essential role in the late steps of ribosome biogenesis. This chain is GTPase Der, found in Salmonella typhi.